Reading from the N-terminus, the 150-residue chain is Aspartate 1-decarboxylase (150 aa).

Ser-25 (schiff-base intermediate with substrate; via pyruvic acid) is an active-site residue. Residue Ser-25 is modified to Pyruvic acid (Ser). Thr-57 contacts substrate. Residue Tyr-58 is the Proton donor of the active site. Residue 73–75 participates in substrate binding; the sequence is GAA.

The protein belongs to the PanD family. As to quaternary structure, heterooctamer of four alpha and four beta subunits. Pyruvate is required as a cofactor. In terms of processing, is synthesized initially as an inactive proenzyme, which is activated by self-cleavage at a specific serine bond to produce a beta-subunit with a hydroxyl group at its C-terminus and an alpha-subunit with a pyruvoyl group at its N-terminus.

It is found in the cytoplasm. The catalysed reaction is L-aspartate + H(+) = beta-alanine + CO2. The protein operates within cofactor biosynthesis; (R)-pantothenate biosynthesis; beta-alanine from L-aspartate: step 1/1. Catalyzes the pyruvoyl-dependent decarboxylation of aspartate to produce beta-alanine. The chain is Aspartate 1-decarboxylase from Kocuria rhizophila (strain ATCC 9341 / DSM 348 / NBRC 103217 / DC2201).